The chain runs to 219 residues: Probable nicotinate-nucleotide adenylyltransferase (219 aa).

The protein belongs to the NadD family.

The catalysed reaction is nicotinate beta-D-ribonucleotide + ATP + H(+) = deamido-NAD(+) + diphosphate. Its pathway is cofactor biosynthesis; NAD(+) biosynthesis; deamido-NAD(+) from nicotinate D-ribonucleotide: step 1/1. Catalyzes the reversible adenylation of nicotinate mononucleotide (NaMN) to nicotinic acid adenine dinucleotide (NaAD). The polypeptide is Probable nicotinate-nucleotide adenylyltransferase (Pseudomonas entomophila (strain L48)).